Reading from the N-terminus, the 246-residue chain is 1-(5-phosphoribosyl)-5-[(5-phosphoribosylamino)methylideneamino] imidazole-4-carboxamide isomerase (246 aa).

Asp8 (proton acceptor) is an active-site residue. The active-site Proton donor is Asp131.

It belongs to the HisA/HisF family.

The protein localises to the cytoplasm. It catalyses the reaction 1-(5-phospho-beta-D-ribosyl)-5-[(5-phospho-beta-D-ribosylamino)methylideneamino]imidazole-4-carboxamide = 5-[(5-phospho-1-deoxy-D-ribulos-1-ylimino)methylamino]-1-(5-phospho-beta-D-ribosyl)imidazole-4-carboxamide. The protein operates within amino-acid biosynthesis; L-histidine biosynthesis; L-histidine from 5-phospho-alpha-D-ribose 1-diphosphate: step 4/9. The polypeptide is 1-(5-phosphoribosyl)-5-[(5-phosphoribosylamino)methylideneamino] imidazole-4-carboxamide isomerase (Chromobacterium violaceum (strain ATCC 12472 / DSM 30191 / JCM 1249 / CCUG 213 / NBRC 12614 / NCIMB 9131 / NCTC 9757 / MK)).